Here is a 224-residue protein sequence, read N- to C-terminus: Urease accessory protein UreF (224 aa).

It belongs to the UreF family. As to quaternary structure, ureD, UreF and UreG form a complex that acts as a GTP-hydrolysis-dependent molecular chaperone, activating the urease apoprotein by helping to assemble the nickel containing metallocenter of UreC. The UreE protein probably delivers the nickel.

Its subcellular location is the cytoplasm. Its function is as follows. Required for maturation of urease via the functional incorporation of the urease nickel metallocenter. This is Urease accessory protein UreF from Pseudomonas fluorescens (strain Pf0-1).